The following is a 155-amino-acid chain: Small ribosomal subunit protein uS7cz/uS7cy (155 aa).

The protein belongs to the universal ribosomal protein uS7 family. In terms of assembly, part of the 30S ribosomal subunit.

The protein resides in the plastid. It is found in the chloroplast. Functionally, one of the primary rRNA binding proteins, it binds directly to 16S rRNA where it nucleates assembly of the head domain of the 30S subunit. This Amborella trichopoda protein is Small ribosomal subunit protein uS7cz/uS7cy (rps7-A).